The chain runs to 2167 residues: Papilin (2167 aa).

An N-terminal signal peptide occupies residues 1–19; that stretch reads MRLLLFSAALLLCSVPTWA. One can recognise a TSP type-1 1 domain in the interval 76–123; sequence TGNWGPWVPENECSRSCGGGVQLEKRQCSGDCTGASVRYISCNLNACE. Disulfide bonds link Cys-88-Cys-117, Cys-92-Cys-122, and Cys-103-Cys-107. The N-linked (GlcNAc...) asparagine glycan is linked to Asn-268. TSP type-1 domains follow at residues 341 to 402, 404 to 459, and 461 to 525; these read VDYM…VDCE, EWFT…TCNR, and ACPE…GPCE. 3 disulfide bridges follow: Cys-353–Cys-396, Cys-357–Cys-401, and Cys-368–Cys-382. Asn-386 and Asn-445 each carry an N-linked (GlcNAc...) asparagine glycan. Asn-541, Asn-568, and Asn-638 each carry an N-linked (GlcNAc...) asparagine glycan. TSP type-1 domains are found at residues 585–643 and 645–702; these read CEYE…TNEE and CTGT…DDCP. N-linked (GlcNAc...) asparagine glycosylation is found at Asn-715, Asn-729, Asn-741, Asn-814, Asn-820, Asn-857, Asn-933, and Asn-1090. 6 disulfides stabilise this stretch: Cys-1089/Cys-1141, Cys-1099/Cys-1124, Cys-1116/Cys-1137, Cys-1150/Cys-1202, Cys-1161/Cys-1185, and Cys-1177/Cys-1198. 2 consecutive BPTI/Kunitz inhibitor domains span residues 1089 to 1141 and 1150 to 1202; these read CNQT…ETIC and CYLP…SMFC. The disordered stretch occupies residues 1239–1273; that stretch reads QSAEQPQPQQPQQQQQQQQQQPQQPRQSMEDICRS. The segment covering 1243–1263 has biased composition (low complexity); sequence QPQPQQPQQQQQQQQQQPQQP. Intrachain disulfides connect Cys-1271-Cys-1321, Cys-1280-Cys-1304, and Cys-1296-Cys-1317. The region spanning 1271–1321 is the BPTI/Kunitz inhibitor 3 domain; sequence CRSRQDAGPCETYSDQWFYNAFSQECETFTYGGCGGNLNRFRSKDECEQRC. The segment at 1332–1365 is disordered; that stretch reads ARQEQAQPAAQPAQPAQPSNIVSPPQQSASPVVV. Disulfide bonds link Cys-1375/Cys-1425, Cys-1384/Cys-1408, Cys-1400/Cys-1421, Cys-1447/Cys-1497, Cys-1456/Cys-1480, Cys-1472/Cys-1493, Cys-1504/Cys-1554, Cys-1513/Cys-1537, and Cys-1529/Cys-1550. BPTI/Kunitz inhibitor domains are found at residues 1375 to 1425, 1447 to 1497, and 1504 to 1554; these read CHLN…ESLC, CDEA…KAAC, and CQLP…QARC. Residues 1556 to 1615 form a disordered region; the sequence is KDDQTTTTSQPEELPSLPLVQEDPQPRPAFSLKQSFAHSRRRDAPFARSVSARHHTPDSE. Intrachain disulfides connect Cys-1621–Cys-1671, Cys-1630–Cys-1654, Cys-1646–Cys-1667, Cys-1731–Cys-1781, Cys-1740–Cys-1764, Cys-1756–Cys-1777, Cys-1790–Cys-1840, Cys-1799–Cys-1823, and Cys-1815–Cys-1836. BPTI/Kunitz inhibitor domains lie at 1621–1671, 1731–1781, and 1790–1840; these read CYAV…ETSC, CMLP…ERAC, and CELP…ESLC. A glycan (N-linked (GlcNAc...) asparagine) is linked at Asn-1848. Intrachain disulfides connect Cys-1853–Cys-1903, Cys-1862–Cys-1886, Cys-1878–Cys-1899, Cys-1914–Cys-1964, Cys-1923–Cys-1947, and Cys-1939–Cys-1960. BPTI/Kunitz inhibitor domains are found at residues 1853-1903 and 1914-1964; these read CTLE…QQSC and CTLR…FRRC. N-linked (GlcNAc...) asparagine glycans are attached at residues Asn-1992, Asn-2087, and Asn-2133. A disordered region spans residues 2075 to 2106; it reads RTTSRPMLTPSKNFSLGTPPTPSPSTVSTTPF. Residues 2078–2090 show a composition bias toward polar residues; that stretch reads SRPMLTPSKNFSL. The PLAC domain maps to 2124–2163; sequence TSNSCMDVGNASTCDLIVKNGLCGKKRYGTFCCHTCTRVH.

The protein belongs to the papilin family. As to expression, localizes to the basement membranes of the gonad primordium, pharynx and intestine (at protein level). Expressed in head and CAN neurons, coelomocytes, body-wall muscles and anal depressor and sphincter and stomatointestinal muscles. Expressed Isoform a: is expressed in body wall muscles and distal cell tips. Isoform b: expressed in embryonic muscles.

It is found in the secreted. The protein localises to the extracellular space. It localises to the extracellular matrix. Its subcellular location is the basement membrane. Its function is as follows. Involved in pharynx morphogenesis probably by remodeling the basement membrane. Functionally, plays a role in embryogenesis, the second phase of distal cell tip migration and is required for distribution of the metalloproteinase, mig-17, during organogenesis. Plays a role in post embryonic distal cell tip migration. Essential extracellular matrix (ECM) protein required for hypodermal enclosure in the embryo. This Caenorhabditis elegans protein is Papilin (mig-6).